The following is a 246-amino-acid chain: tRNA (guanine-N(1)-)-methyltransferase (246 aa).

S-adenosyl-L-methionine-binding positions include G114 and 134–139 (IGDYIL).

It belongs to the RNA methyltransferase TrmD family. Homodimer.

The protein resides in the cytoplasm. The enzyme catalyses guanosine(37) in tRNA + S-adenosyl-L-methionine = N(1)-methylguanosine(37) in tRNA + S-adenosyl-L-homocysteine + H(+). Specifically methylates guanosine-37 in various tRNAs. The sequence is that of tRNA (guanine-N(1)-)-methyltransferase from Coxiella burnetii (strain RSA 493 / Nine Mile phase I).